A 408-amino-acid chain; its full sequence is Argininosuccinate synthase (408 aa).

ATP is bound by residues 8–16 (AYSGGLDTT) and alanine 35. Residues tyrosine 86 and serine 91 each coordinate L-citrulline. Glycine 116 lines the ATP pocket. The L-aspartate site is built by threonine 118, asparagine 122, and aspartate 123. L-citrulline is bound at residue asparagine 122. 5 residues coordinate L-citrulline: arginine 126, serine 177, serine 186, glutamate 263, and tyrosine 275.

This sequence belongs to the argininosuccinate synthase family. Type 1 subfamily. As to quaternary structure, homotetramer.

It localises to the cytoplasm. The catalysed reaction is L-citrulline + L-aspartate + ATP = 2-(N(omega)-L-arginino)succinate + AMP + diphosphate + H(+). The protein operates within amino-acid biosynthesis; L-arginine biosynthesis; L-arginine from L-ornithine and carbamoyl phosphate: step 2/3. In Lachnospira eligens (strain ATCC 27750 / DSM 3376 / VPI C15-48 / C15-B4) (Eubacterium eligens), this protein is Argininosuccinate synthase.